The sequence spans 62 residues: Photosystem II reaction center protein Z (62 aa).

2 helical membrane-spanning segments follow: residues 8–28 and 41–61; these read AVFA…VVFA and FSGT…NSLI.

Belongs to the PsbZ family. As to quaternary structure, PSII is composed of 1 copy each of membrane proteins PsbA, PsbB, PsbC, PsbD, PsbE, PsbF, PsbH, PsbI, PsbJ, PsbK, PsbL, PsbM, PsbT, PsbY, PsbZ, Psb30/Ycf12, at least 3 peripheral proteins of the oxygen-evolving complex and a large number of cofactors. It forms dimeric complexes.

It is found in the plastid. The protein resides in the chloroplast thylakoid membrane. Its function is as follows. May control the interaction of photosystem II (PSII) cores with the light-harvesting antenna, regulates electron flow through the 2 photosystem reaction centers. PSII is a light-driven water plastoquinone oxidoreductase, using light energy to abstract electrons from H(2)O, generating a proton gradient subsequently used for ATP formation. In Nicotiana sylvestris (Wood tobacco), this protein is Photosystem II reaction center protein Z.